We begin with the raw amino-acid sequence, 143 residues long: Large ribosomal subunit protein uL16 (143 aa).

This sequence belongs to the universal ribosomal protein uL16 family. As to quaternary structure, part of the 50S ribosomal subunit.

In terms of biological role, binds 23S rRNA and is also seen to make contacts with the A and possibly P site tRNAs. In Thermosynechococcus vestitus (strain NIES-2133 / IAM M-273 / BP-1), this protein is Large ribosomal subunit protein uL16.